Reading from the N-terminus, the 115-residue chain is Allergen Tha p 2 (115 aa).

A signal peptide spans 1-15 (MKLLIFAILIALSSS).

This is Allergen Tha p 2 from Thaumetopoea pityocampa (Pine processionary moth).